A 3739-amino-acid polypeptide reads, in one-letter code: Cardiomyopathy-associated protein 5 (3739 aa).

Disordered stretches follow at residues 1-205 (MESG…PPIT), 268-814 (SLEP…SAFV), 835-884 (VSVS…AIQS), 967-1270 (LSED…SDVP), 1288-1313 (TQAS…RDAK), 1325-1637 (SSAL…NLVS), 1650-1969 (EMNR…EKGK), 1986-2016 (SSIP…AIEP), 2065-2246 (FLSN…WETR), 2273-2318 (AVGE…LALD), 2377-2498 (VYPE…SAVE), 2513-2532 (KKQE…TSKD), and 2579-2616 (SADG…SEDQ). Residues 18-47 (ADEEVAQELETEEESEGEGEETAAESEEEP) show a composition bias toward acidic residues. Residues 48–62 (DARLSDEDEEGKTKQ) show a composition bias toward basic and acidic residues. Polar residues predominate over residues 84 to 106 (TWETNSSRSSTPWASGESQTSGI). Basic residues predominate over residues 130-153 (RTRKRTQKSKRGSPSLRRKGSKKR). Residue Ser155 is modified to Phosphoserine. Composition is skewed to polar residues over residues 156 to 175 (LESQ…SESP) and 325 to 336 (ADSNLNVPSSTE). Residues 380-406 (ATMVLERAKEELEQNAQGKESSEDDAS) adopt a coiled-coil conformation. 3 stretches are compositionally biased toward basic and acidic residues: residues 479–637 (IVHR…REEE), 644–663 (SIVH…REEE), and 670–730 (SIVH…ERGV). Repeat copies occupy residues 482–493 (REEEHAPEPIVH) and 494–505 (REEEHAPEPIVH). The segment at 482-720 (REEEHAPEPI…EEHAPEPMVH (239 aa)) is 20 X 12 AA approximate tandem repeats of R-[DE]-[EK]-[EG]-H-[AV]-P-E-[PS]-[IM]-V-[HLR]. The stretch at 506 to 519 (REEEHAPEPESIVH) is one 3; approximate repeat. Residues 520-531 (REEEHAPESIVH) form repeat 4. The stretch at 532–545 (REEEHAPEPVPIVH) is one 5; approximate repeat. The 6; approximate repeat unit spans residues 546–559 (REEEHAPEPESIVH). 4 consecutive repeat copies span residues 560–571 (REEEHAPEPIVH), 572–583 (RDKGHALEPIVH), 584–595 (REEEHAPEPIVH), and 596–607 (RDEGHAPEPIVH). An 11; approximate repeat occupies 608–621 (REEEHVPEPESIVR). The 12; approximate repeat unit spans residues 622-633 (KGEEHAPEPIVH). The stretch at 634–647 (REEEQVPEPESIVH) is one 14; approximate repeat. Repeat unit 15 spans residues 648–659 (REEEHAPEPIVH). The 16; approximate repeat unit spans residues 660 to 673 (REEEQVPEPESIVH). 4 tandem repeats follow at residues 674 to 685 (REEEHAPEPMVL), 686 to 696 (REEHAPEPIVR), 697 to 708 (REEEHAPEPIVH), and 709 to 720 (REEEHAPEPMVH). Residues 740–756 (TEPEDSSLEEEIIELDY) are compositionally biased toward acidic residues. Position 850 is a phosphoserine (Ser850). 2 stretches are compositionally biased toward polar residues: residues 861-884 (PAMT…AIQS) and 1151-1161 (CLTSPSEQTVL). Composition is skewed to basic and acidic residues over residues 1188-1197 (AETEQNKVEP) and 1230-1242 (EHSE…EESS). Over residues 1337-1351 (TSVLPTSQPSVSPES) the composition is skewed to polar residues. Composition is skewed to basic and acidic residues over residues 1441 to 1460 (LEQR…HSPP) and 1476 to 1486 (TEVKQESKITR). Residues 1522–1540 (ASSSATTVPVTKLDSNSTK) are compositionally biased toward polar residues. Basic and acidic residues-rich tracts occupy residues 1620-1631 (NDKHEEITRSPD), 1697-1706 (IDSRDRDRSL), 1726-1742 (GPAE…ENRK), 1760-1770 (IEQKEPKRTLH), 1786-1803 (DKPE…ENLE), and 1836-1850 (EKPD…DRKP). Positions 1854–1863 (QLESSESTDL) are enriched in polar residues. Composition is skewed to basic and acidic residues over residues 1874-1885 (DTDHTSETRNQE), 1896-1916 (LSQE…EGRK), 1992-2001 (KVSDNEDLET), and 2153-2165 (ARKE…HKET). A compositionally biased stretch (polar residues) spans 2181–2190 (KSAQSAFTRM). Position 2192 is a phosphoserine (Ser2192). 5 stretches are compositionally biased toward basic and acidic residues: residues 2212–2244 (GEDR…DGWE), 2279–2299 (RMPE…RLEQ), 2306–2318 (KLME…LALD), 2377–2419 (VYPE…ETDG), and 2429–2448 (ELEK…RRFV). The residue at position 2411 (Ser2411) is a Phosphoserine. Ser2495 carries the post-translational modification Phosphoserine. A compositionally biased stretch (basic and acidic residues) spans 2513-2523 (KKQETWSDRPT). Residues 2640–2664 (SVDQEESEQMQDKLQYLEEKASFKS) adopt a coiled-coil conformation. Disordered regions lie at residues 2667-2725 (VHDE…QPTV), 2742-2773 (LSPG…SSAE), 2791-2835 (GPEK…GMPL), 2881-2959 (EKNE…EREI), 3027-3047 (LESE…DVNL), and 3111-3174 (PEEP…QKEP). The span at 2682-2709 (SKLEVPDRKITSLKENKTKETHKTKEEI) shows a compositional bias: basic and acidic residues. The required for RYR2 clustering stretch occupies residues 2731 to 3041 (YFEKYTLIDY…SSQGNEAGNA (311 aa)). Residues 2762 to 2773 (KTLTSFPESSAE) show a composition bias toward polar residues. 2 stretches are compositionally biased toward basic and acidic residues: residues 2791 to 2804 (GPEK…HAEM) and 2812 to 2828 (KPDD…DVDS). Ser2905 is modified (phosphoserine). The segment covering 2918 to 2929 (YILKDDILHDES) has biased composition (basic and acidic residues). A compositionally biased stretch (polar residues) spans 3030–3047 (EPSSQGNEAGNASPDVNL). Residues 3153–3162 (VWDRTEDQSA) show a composition bias toward basic and acidic residues. Residues 3187–3214 (KSLVSEMDKALDIHKDHEVSALDTAISA) form an amphipathic helix H1 region. The B-box coiled-coil; BBC stretch occupies residues 3215 to 3342 (VKVQLGEFLE…ERLLSAMEST (128 aa)). Residues 3244–3323 (FNTIEEKCSK…REAEELDETV (80 aa)) adopt a coiled-coil conformation. Residues 3301–3318 (SMDTAKDTLETIVREAEE) are amphipathic helix H2. Fibronectin type-III domains follow at residues 3374–3475 (VPQP…TAPS) and 3476–3568 (TPVI…TRGT). An amphipathic helix H3 region spans residues 3421–3437 (EINELVEEYRLTVKESC). Residues 3550–3735 (NASGTSEQSE…LHLGLEPPDS (186 aa)) enclose the B30.2/SPRY domain.

In terms of assembly, interacts with PRKAR2A. Interacts with ACTN2, DES and DTNBP1/dysbindin. Interacts with DMD/dystrophin. Interacts with the calcineurin catalytic subunit PPP3CA. Interacts with TTN. Interacts with CAPN3; this interaction, which results in CMYA5 proteolysis, may protect CAPN3 from autolysis. Interacts with FSD2. In cardiac muscles, identified in a complex composed of FSD2, CMYA5 and RYR2. Post-translationally, phosphorylated by PKA. In terms of tissue distribution, expressed in skin as well as in cardiac muscle. Expressed in skeletal muscle (at protein level).

The protein resides in the nucleus. It is found in the cytoplasm. Its subcellular location is the perinuclear region. It localises to the myofibril. The protein localises to the sarcomere. The protein resides in the m line. It is found in the sarcoplasmic reticulum. May serve as an anchoring protein that mediates the subcellular compartmentation of protein kinase A (PKA) via binding to PRKAR2A. May attenuate calcineurin ability to induce slow-fiber gene program in muscle and may negatively modulate skeletal muscle regeneration. Plays a role in the assembly of ryanodine receptor (RYR2) clusters in striated muscle. The polypeptide is Cardiomyopathy-associated protein 5 (Cmya5) (Mus musculus (Mouse)).